The chain runs to 470 residues: Cysteine--tRNA ligase (470 aa).

Residue cysteine 27 participates in Zn(2+) binding. Positions 29–39 (PTVYNFFHIGN) match the 'HIGH' region motif. Cysteine 211, histidine 236, and glutamate 240 together coordinate Zn(2+). A 'KMSKS' region motif is present at residues 268–272 (KMSKS). An ATP-binding site is contributed by lysine 271.

Belongs to the class-I aminoacyl-tRNA synthetase family. As to quaternary structure, monomer. Requires Zn(2+) as cofactor.

The protein localises to the cytoplasm. It carries out the reaction tRNA(Cys) + L-cysteine + ATP = L-cysteinyl-tRNA(Cys) + AMP + diphosphate. This chain is Cysteine--tRNA ligase, found in Clostridium botulinum (strain Alaska E43 / Type E3).